The following is a 165-amino-acid chain: Calcium-binding protein H (165 aa).

4 EF-hand domains span residues 7 to 42, 43 to 78, 88 to 123, and 124 to 159; these read QIEKDVEKIIGQYDGDKNGEVTINEAIEFFKRMGSK, YPEKCAIVLFKMYDLDNEGKISYDEIQEEIFKRYQD, YFQDDIEAFLLRYDKNRDNRIDFKELEQCFESIGSD, and HPKENANHIFTEIDKNRDGYLTIAEIKNYCRNTIRS. 20 residues coordinate Ca(2+): Asp20, Asp22, Asn24, Glu26, Glu31, Asp56, Asp58, Glu60, Lys62, Glu67, Asp101, Asn103, Asp105, Arg107, Glu112, Asp137, Asn139, Asp141, Tyr143, and Glu148.

The protein is Calcium-binding protein H (cbpH) of Dictyostelium discoideum (Social amoeba).